Reading from the N-terminus, the 189-residue chain is Elongation factor P (189 aa).

Belongs to the elongation factor P family.

The protein resides in the cytoplasm. It functions in the pathway protein biosynthesis; polypeptide chain elongation. Functionally, involved in peptide bond synthesis. Stimulates efficient translation and peptide-bond synthesis on native or reconstituted 70S ribosomes in vitro. Probably functions indirectly by altering the affinity of the ribosome for aminoacyl-tRNA, thus increasing their reactivity as acceptors for peptidyl transferase. The chain is Elongation factor P from Pseudomonas savastanoi pv. phaseolicola (strain 1448A / Race 6) (Pseudomonas syringae pv. phaseolicola (strain 1448A / Race 6)).